Here is a 60-residue protein sequence, read N- to C-terminus: MAVQQNKKSRSARDMRRSHDALEPNALSVEKSTGEVHLRHHVSPDGFYRGRKVIDKGADE.

A disordered region spans residues 1-60 (MAVQQNKKSRSARDMRRSHDALEPNALSVEKSTGEVHLRHHVSPDGFYRGRKVIDKGADE). A compositionally biased stretch (basic and acidic residues) spans 11 to 22 (SARDMRRSHDAL).

It belongs to the bacterial ribosomal protein bL32 family.

The chain is Large ribosomal subunit protein bL32 from Stutzerimonas stutzeri (strain A1501) (Pseudomonas stutzeri).